Here is a 475-residue protein sequence, read N- to C-terminus: Argininosuccinate lyase (475 aa).

The protein belongs to the lyase 1 family. Argininosuccinate lyase subfamily.

Its subcellular location is the cytoplasm. The catalysed reaction is 2-(N(omega)-L-arginino)succinate = fumarate + L-arginine. The protein operates within amino-acid biosynthesis; L-arginine biosynthesis; L-arginine from L-ornithine and carbamoyl phosphate: step 3/3. The polypeptide is Argininosuccinate lyase (Streptomyces coelicolor (strain ATCC BAA-471 / A3(2) / M145)).